A 481-amino-acid polypeptide reads, in one-letter code: Subtilisin-like protease 1 (481 aa).

The first 19 residues, 1–19 (MGVFRFISISLAAVSAANA), serve as a signal peptide directing secretion. The propeptide occupies 20-116 (AQILSMPHAQ…VEPDTIISVH (97 aa)). Residues 34 to 115 (SYIVMMKDDT…FVEPDTIISV (82 aa)) form the Inhibitor I9 domain. One can recognise a Peptidase S8 domain in the interval 126–400 (SWGLARISSS…NVLINNGGAK (275 aa)). Residues D158 and H190 each act as charge relay system in the active site. Positions 175 to 198 (GSNQVNDGDDNDRSGHGTHTSGTM) are disordered. The N-linked (GlcNAc...) asparagine glycan is linked to N251. A disordered region spans residues 281–312 (GNDNTDARSSSPASEPSVCTVGASAEDDSRSS). Polar residues predominate over residues 282-294 (NDNTDARSSSPAS). The active-site Charge relay system is the S345. The segment at 379-455 (ASISDVGPGT…HPHTPFPGGD (77 aa)) is disordered. Over residues 424–450 (PQQPAPGEPSTPAPAPMPPTPQHPHTP) the composition is skewed to pro residues.

The protein belongs to the peptidase S8 family.

The protein localises to the secreted. Its function is as follows. Secreted subtilisin-like serine protease with keratinolytic activity that contributes to pathogenicity. The polypeptide is Subtilisin-like protease 1 (SUB1) (Arthroderma gypseum (strain ATCC MYA-4604 / CBS 118893) (Microsporum gypseum)).